Here is a 754-residue protein sequence, read N- to C-terminus: Bifunctional sesterterpene synthase astC (754 aa).

An N-terminal signal peptide occupies residues 1 to 24; the sequence is MASLEVFVLYLRIFFISFMSRARS. Positions 58–388 are sesterterpene synthase; the sequence is IQYRHSKLVD…RYHFHKPEHW (331 aa). The Mg(2+) site is built by Asp-149 and Asp-153. A geranylfarnesyl diphosphate synthase region spans residues 389–753; the sequence is RQVENVDDDG…LRLLLKRLHV (365 aa). Basic and acidic residues predominate over residues 392–403; sequence ENVDDDGNKSDD. A disordered region spans residues 392–414; sequence ENVDDDGNKSDDSGIAMKDSPES. The Mg(2+) site is built by Asp-512 and Asp-516.

The protein in the N-terminal section; belongs to the terpene synthase family. It in the C-terminal section; belongs to the FPP/GGPP synthase family. Requires Mg(2+) as cofactor.

The catalysed reaction is (2E,6E,10E,14E)-geranylfarnesyl diphosphate = preasperterpenoid A + diphosphate. The protein operates within secondary metabolite biosynthesis; terpenoid biosynthesis. Its function is as follows. Bifunctional sesterterpene synthase; part of the gene cluster that mediates the biosynthesis of the asperterpenoids, sesterterpenes that exhibit anti-tuberculosis activity. The first step of the pathway is performed by the sesterterpene synthase astC that possesses both prenyl transferase and terpene cyclase activity, converting isopentenyl diphosphate and dimethylallyl diphosphate into geranylfarnesyl diphosphate (GFPP) and further converting GFPP into preasperterpenoid A, respectively. The cytochrome P450 monooxygenase astB then dually oxidizes preasperterpenoid A to produce asperterpenoid A along with a minor product, asperterpenoid B. Finally, the cytochrome P450 monooxygenase astA converts asperterpenoid A into asperterpenoid C. This is Bifunctional sesterterpene synthase astC from Talaromyces wortmannii (Penicillium wortmannii).